The chain runs to 265 residues: Flavin-dependent thymidylate synthase (265 aa).

Residues 11 to 224 (GFLKLIDFMG…PIAFNSFENH (214 aa)) form the ThyX domain. FAD contacts are provided by residues Ser-56, 79-81 (RHR), and Glu-87. 76 to 79 (QWMR) lines the dUMP pocket. The short motif at 79 to 89 (RHRTARINEVS) is the ThyX motif element. Arg-155 serves as a coordination point for dUMP. Residues 171-173 (DLN) and His-177 each bind FAD. Arg-182 contacts dUMP. Arg-182 functions as the Involved in ionization of N3 of dUMP, leading to its activation in the catalytic mechanism.

It belongs to the thymidylate synthase ThyX family. Homotetramer. FAD serves as cofactor.

It catalyses the reaction dUMP + (6R)-5,10-methylene-5,6,7,8-tetrahydrofolate + NADPH + H(+) = dTMP + (6S)-5,6,7,8-tetrahydrofolate + NADP(+). Its pathway is pyrimidine metabolism; dTTP biosynthesis. Its function is as follows. Catalyzes the reductive methylation of 2'-deoxyuridine-5'-monophosphate (dUMP) to 2'-deoxythymidine-5'-monophosphate (dTMP) while utilizing 5,10-methylenetetrahydrofolate (mTHF) as the methyl donor, and NADPH and FADH(2) as the reductant. This is Flavin-dependent thymidylate synthase from Borreliella burgdorferi (strain ATCC 35210 / DSM 4680 / CIP 102532 / B31) (Borrelia burgdorferi).